We begin with the raw amino-acid sequence, 67 residues long: ATP synthase F(0) complex subunit 8 (67 aa).

A helical membrane pass occupies residues 8–24 (TWFTTVLASSITLFILM). Residue Lys54 is modified to N6-acetyllysine; alternate. Residue Lys54 is modified to N6-succinyllysine; alternate. Lys57 bears the N6-acetyllysine mark.

This sequence belongs to the ATPase protein 8 family. As to quaternary structure, component of the ATP synthase complex composed at least of ATP5F1A/subunit alpha, ATP5F1B/subunit beta, ATP5MC1/subunit c (homooctomer), MT-ATP6/subunit a, MT-ATP8/subunit 8, ATP5ME/subunit e, ATP5MF/subunit f, ATP5MG/subunit g, ATP5MK/subunit k, ATP5MJ/subunit j, ATP5F1C/subunit gamma, ATP5F1D/subunit delta, ATP5F1E/subunit epsilon, ATP5PF/subunit F6, ATP5PB/subunit b, ATP5PD/subunit d, ATP5PO/subunit OSCP. ATP synthase complex consists of a soluble F(1) head domain (subunits alpha(3) and beta(3)) - the catalytic core - and a membrane F(0) domain - the membrane proton channel (subunits c, a, 8, e, f, g, k and j). These two domains are linked by a central stalk (subunits gamma, delta, and epsilon) rotating inside the F1 region and a stationary peripheral stalk (subunits F6, b, d, and OSCP). Interacts with PRICKLE3.

It is found in the mitochondrion membrane. Subunit 8, of the mitochondrial membrane ATP synthase complex (F(1)F(0) ATP synthase or Complex V) that produces ATP from ADP in the presence of a proton gradient across the membrane which is generated by electron transport complexes of the respiratory chain. ATP synthase complex consist of a soluble F(1) head domain - the catalytic core - and a membrane F(1) domain - the membrane proton channel. These two domains are linked by a central stalk rotating inside the F(1) region and a stationary peripheral stalk. During catalysis, ATP synthesis in the catalytic domain of F(1) is coupled via a rotary mechanism of the central stalk subunits to proton translocation. In vivo, can only synthesize ATP although its ATP hydrolase activity can be activated artificially in vitro. Part of the complex F(0) domain. The chain is ATP synthase F(0) complex subunit 8 from Cricetulus griseus (Chinese hamster).